Consider the following 241-residue polypeptide: MORN repeat-containing protein 3 (241 aa).

Positions 6–35 (CPRKVEPPWKGWDRKAQKNGLRHQVFAVNG) are interaction with MDM2. 7 MORN repeats span residues 38 to 60 (YVGEWKGNLKHGKGTQVWKKSGA), 62 to 84 (YEGDWKFGKRDGYGSLSHPDPET), 91 to 113 (YSGWWKGDKKSGYGIQFFGPKEY), 114 to 136 (YEGEWCNNQRSGWGRMYYNNGDI), 137 to 159 (YEGQWQNDKPEGEGMLRLKNGNR), 160 to 182 (YEGIWERGMKNGHGRFFHLDHGQ), and 184 to 205 (FEGYWVDNVAKCGTMIDFGRDE). The tract at residues 76 to 100 (SLSHPDPETGKLRRVYSGWWKGDKK) is interaction with SIRT1. The segment at 206–240 (APEPTQFPIPKVEILDPDGVLKEALDKLMKPEEEE) is interaction with TP53.

Interacts with MEIG1. Interacts with TP53, MDM2 and SIRT1; the interactions mediate post-transcriptional modifications of TP53 by MDM2 and SIRT1. In terms of tissue distribution, expressed in testis (at protein level).

The protein resides in the cytoplasmic vesicle. It is found in the secretory vesicle. Its subcellular location is the acrosome. Functionally, assembles a suppression complex (suppresome) by tethering SIRT1 and MDM2 to regulate composite modifications of p53/TP53. Confers both deacetylation-mediated functional inactivation, by SIRT1, and ubiquitination-dependent degradation, by MDM2, of p53/TP53, promoting a proliferative and cell survival behaviors. May play a role in the regulation of spermatogenesis. The chain is MORN repeat-containing protein 3 (Morn3) from Mus musculus (Mouse).